A 132-amino-acid chain; its full sequence is Ribosome-binding factor A (132 aa).

It belongs to the RbfA family. In terms of assembly, monomer. Binds 30S ribosomal subunits, but not 50S ribosomal subunits or 70S ribosomes.

Its subcellular location is the cytoplasm. In terms of biological role, one of several proteins that assist in the late maturation steps of the functional core of the 30S ribosomal subunit. Associates with free 30S ribosomal subunits (but not with 30S subunits that are part of 70S ribosomes or polysomes). Required for efficient processing of 16S rRNA. May interact with the 5'-terminal helix region of 16S rRNA. This Pseudomonas entomophila (strain L48) protein is Ribosome-binding factor A.